A 261-amino-acid chain; its full sequence is MVICNAIIVLLLAFNTLANPILPSSPNATIVGGQKAKAGECPYQISLQSSSHFCGGTILDEYWILTAAHCVNGQTASKLSIRYNSLKHASGGEKLSVAQIYQHEKYDSWTIDNDIALIKLQSPMTLDQKNAKSVQLPSQGSDVKVGDKVRVSGWGYLKEGSYSLPSDMYRVDIDIVAREQCNKLYEEAGATITDNMICGGNVADGGVDSCQGDSGGPVVDVASNQIVGIVSWGYGCARKGYPGVYTRVGSFIDWIDSKRSQ.

The first 18 residues, 1-18 (MVICNAIIVLLLAFNTLA), serve as a signal peptide directing secretion. Positions 19-29 (NPILPSSPNAT) are excised as a propeptide. In terms of domain architecture, Peptidase S1 spans 30-260 (IVGGQKAKAG…FIDWIDSKRS (231 aa)). C54 and C70 form a disulfide bridge. Active-site charge relay system residues include H69 and D114. 2 disulfide bridges follow: C181–C198 and C210–C236. The Charge relay system role is filled by S214.

The protein belongs to the peptidase S1 family.

The protein resides in the secreted. The sequence is that of Mite allergen Eur m 3 (EURM3) from Euroglyphus maynei (Mayne's house dust mite).